Here is a 115-residue protein sequence, read N- to C-terminus: NADH-ubiquinone oxidoreductase chain 3 (115 aa).

Transmembrane regions (helical) follow at residues 3 to 23 (VMLALLTNTLLSTLLVLIAFW), 55 to 75 (FFLVAITFLLFDLEIALLLPL), and 84 to 104 (LPTMLTMALLLISLLAASLAY).

The protein belongs to the complex I subunit 3 family. In terms of assembly, core subunit of respiratory chain NADH dehydrogenase (Complex I) which is composed of 45 different subunits. Interacts with TMEM186. Interacts with TMEM242.

It localises to the mitochondrion inner membrane. It carries out the reaction a ubiquinone + NADH + 5 H(+)(in) = a ubiquinol + NAD(+) + 4 H(+)(out). Functionally, core subunit of the mitochondrial membrane respiratory chain NADH dehydrogenase (Complex I) which catalyzes electron transfer from NADH through the respiratory chain, using ubiquinone as an electron acceptor. Essential for the catalytic activity of complex I. This chain is NADH-ubiquinone oxidoreductase chain 3, found in Felis catus (Cat).